Here is a 459-residue protein sequence, read N- to C-terminus: uncharacterized protein (459 aa).

Residues 2–60 (NLRVKQKIPLKIKRMGINGEGIGFYKRTLVFVPGALKGEEIFCQITSVKHNFVQARLLT) enclose the TRAM domain. 4 residues coordinate [4Fe-4S] cluster: Cys-73, Cys-79, Cys-82, and Cys-162. Positions 284, 313, 334, and 382 each coordinate S-adenosyl-L-methionine. Cys-409 functions as the Nucleophile in the catalytic mechanism.

The protein belongs to the class I-like SAM-binding methyltransferase superfamily. RNA M5U methyltransferase family.

This is an uncharacterized protein from Streptococcus mutans serotype c (strain ATCC 700610 / UA159).